Here is a 362-residue protein sequence, read N- to C-terminus: Protein RecA (362 aa).

77-84 (GPESSGKT) serves as a coordination point for ATP.

This sequence belongs to the RecA family.

It localises to the cytoplasm. Functionally, can catalyze the hydrolysis of ATP in the presence of single-stranded DNA, the ATP-dependent uptake of single-stranded DNA by duplex DNA, and the ATP-dependent hybridization of homologous single-stranded DNAs. It interacts with LexA causing its activation and leading to its autocatalytic cleavage. This chain is Protein RecA, found in Rhizobium etli (strain CIAT 652).